The primary structure comprises 344 residues: Sesquiterpene synthase 9 (344 aa).

Residues Asp88, Asn224, Ser228, and Glu232 each coordinate Mg(2+). The DDXXD motif signature appears at 88-92 (DEYSD). Positions 224–232 (NDMLSWNVE) match the NSE/DTE motif motif. (2E,6E)-farnesyl diphosphate-binding residues include Arg313 and Tyr314.

This sequence belongs to the terpene synthase family. Requires Mg(2+) as cofactor.

Terpene cyclase that catalyzes the cyclization of farnesyl diphosphate (FPP) to a single major sesquiterpene scaffold whose chemical structure is still unknown. This Postia placenta (strain ATCC 44394 / Madison 698-R) (Brown rot fungus) protein is Sesquiterpene synthase 9.